Here is a 269-residue protein sequence, read N- to C-terminus: Formamidopyrimidine-DNA glycosylase (269 aa).

The active-site Schiff-base intermediate with DNA is the proline 2. Glutamate 3 functions as the Proton donor in the catalytic mechanism. Lysine 57 acts as the Proton donor; for beta-elimination activity in catalysis. The DNA site is built by histidine 90, arginine 109, and arginine 150. The FPG-type zinc finger occupies asparagine 235–arginine 269. Arginine 259 acts as the Proton donor; for delta-elimination activity in catalysis.

The protein belongs to the FPG family. As to quaternary structure, monomer. Requires Zn(2+) as cofactor.

It carries out the reaction Hydrolysis of DNA containing ring-opened 7-methylguanine residues, releasing 2,6-diamino-4-hydroxy-5-(N-methyl)formamidopyrimidine.. It catalyses the reaction 2'-deoxyribonucleotide-(2'-deoxyribose 5'-phosphate)-2'-deoxyribonucleotide-DNA = a 3'-end 2'-deoxyribonucleotide-(2,3-dehydro-2,3-deoxyribose 5'-phosphate)-DNA + a 5'-end 5'-phospho-2'-deoxyribonucleoside-DNA + H(+). Functionally, involved in base excision repair of DNA damaged by oxidation or by mutagenic agents. Acts as a DNA glycosylase that recognizes and removes damaged bases. Has a preference for oxidized purines, such as 7,8-dihydro-8-oxoguanine (8-oxoG). Has AP (apurinic/apyrimidinic) lyase activity and introduces nicks in the DNA strand. Cleaves the DNA backbone by beta-delta elimination to generate a single-strand break at the site of the removed base with both 3'- and 5'-phosphates. The sequence is that of Formamidopyrimidine-DNA glycosylase from Alteromonas mediterranea (strain DSM 17117 / CIP 110805 / LMG 28347 / Deep ecotype).